The following is a 426-amino-acid chain: Tol-Pal system protein TolB (426 aa).

The first 25 residues, 1 to 25, serve as a signal peptide directing secretion; it reads MSITPSLSRRTVMSLLAAGLSPAFA.

This sequence belongs to the TolB family. The Tol-Pal system is composed of five core proteins: the inner membrane proteins TolA, TolQ and TolR, the periplasmic protein TolB and the outer membrane protein Pal. They form a network linking the inner and outer membranes and the peptidoglycan layer.

It localises to the periplasm. Functionally, part of the Tol-Pal system, which plays a role in outer membrane invagination during cell division and is important for maintaining outer membrane integrity. The sequence is that of Tol-Pal system protein TolB from Polaromonas sp. (strain JS666 / ATCC BAA-500).